The chain runs to 157 residues: Large ribosomal subunit protein eL24 (157 aa).

A disordered region spans residues 94 to 157 (RNQKPEVRKA…ISAPRVGGKR (64 aa)). Residues 96 to 117 (QKPEVRKAQREQAIRAAKEAKK) show a composition bias toward basic and acidic residues. Residues 123–140 (KKPAAPSAKASTKTAQKP) show a composition bias toward low complexity.

This sequence belongs to the eukaryotic ribosomal protein eL24 family. As to quaternary structure, component of the large ribosomal subunit.

Its subcellular location is the cytoplasm. Component of the large ribosomal subunit. The ribosome is a large ribonucleoprotein complex responsible for the synthesis of proteins in the cell. In Pagrus major (Red sea bream), this protein is Large ribosomal subunit protein eL24 (rpl24).